A 762-amino-acid polypeptide reads, in one-letter code: 5-methyltetrahydropteroyltriglutamate--homocysteine methyltransferase (762 aa).

5-methyltetrahydropteroyltri-L-glutamate-binding positions include 18–21 and Lys-112; that span reads REWK. L-homocysteine contacts are provided by residues 435–437 and Glu-488; that span reads IGS. L-methionine-binding positions include 435–437 and Glu-488; that span reads IGS. 5-methyltetrahydropteroyltri-L-glutamate-binding positions include 519–520 and Trp-565; that span reads RC. Asp-603 contacts L-homocysteine. L-methionine is bound at residue Asp-603. 5-methyltetrahydropteroyltri-L-glutamate is bound at residue Glu-609. The Zn(2+) site is built by His-645, Cys-647, and Glu-669. The active-site Proton donor is the His-698. Cys-730 serves as a coordination point for Zn(2+).

This sequence belongs to the vitamin-B12 independent methionine synthase family. Zn(2+) is required as a cofactor.

The catalysed reaction is 5-methyltetrahydropteroyltri-L-glutamate + L-homocysteine = tetrahydropteroyltri-L-glutamate + L-methionine. It participates in amino-acid biosynthesis; L-methionine biosynthesis via de novo pathway; L-methionine from L-homocysteine (MetE route): step 1/1. Functionally, catalyzes the transfer of a methyl group from 5-methyltetrahydrofolate to homocysteine resulting in methionine formation. The chain is 5-methyltetrahydropteroyltriglutamate--homocysteine methyltransferase from Bacillus licheniformis (strain ATCC 14580 / DSM 13 / JCM 2505 / CCUG 7422 / NBRC 12200 / NCIMB 9375 / NCTC 10341 / NRRL NRS-1264 / Gibson 46).